The sequence spans 115 residues: Prefoldin subunit beta (115 aa).

The protein belongs to the prefoldin subunit beta family. Heterohexamer of two alpha and four beta subunits.

Its subcellular location is the cytoplasm. Its function is as follows. Molecular chaperone capable of stabilizing a range of proteins. Seems to fulfill an ATP-independent, HSP70-like function in archaeal de novo protein folding. The sequence is that of Prefoldin subunit beta from Methanococcus aeolicus (strain ATCC BAA-1280 / DSM 17508 / OCM 812 / Nankai-3).